A 167-amino-acid polypeptide reads, in one-letter code: MLTTGRSFRNERQINDAERKKIELVFHQCDVDKKGYMSREDLKIAVVMLFGYKPSKSETNILMENGTIRDCKGVPLEPFATLMRRKMSAEDPYEKARQIFSAFDVHCRGFLKLDDFKSAFKRVAPRLQERTVLEAFRHADQDSDGHISFKDFENIISYGLANTCTST.

3 consecutive EF-hand domains span residues Ala17–Tyr52, Asp91–Arg126, and Leu127–Asn162. Asp140, Asp142, Asp144, His146, and Asp151 together coordinate Ca(2+).

This chain is EF-hand calcium-binding domain-containing protein 11 (efcab11), found in Danio rerio (Zebrafish).